A 263-amino-acid polypeptide reads, in one-letter code: Endonuclease 8 (263 aa).

Residue P2 is the Schiff-base intermediate with DNA of the active site. E3 functions as the Proton donor in the catalytic mechanism. K53 functions as the Proton donor; for beta-elimination activity in the catalytic mechanism. 3 residues coordinate DNA: Q70, R125, and N169. An FPG-type zinc finger spans residues K229 to H263. R253 (proton donor; for delta-elimination activity) is an active-site residue.

The protein belongs to the FPG family. It depends on Zn(2+) as a cofactor.

The enzyme catalyses 2'-deoxyribonucleotide-(2'-deoxyribose 5'-phosphate)-2'-deoxyribonucleotide-DNA = a 3'-end 2'-deoxyribonucleotide-(2,3-dehydro-2,3-deoxyribose 5'-phosphate)-DNA + a 5'-end 5'-phospho-2'-deoxyribonucleoside-DNA + H(+). In terms of biological role, involved in base excision repair of DNA damaged by oxidation or by mutagenic agents. Acts as a DNA glycosylase that recognizes and removes damaged bases. Has a preference for oxidized pyrimidines, such as thymine glycol, 5,6-dihydrouracil and 5,6-dihydrothymine. Has AP (apurinic/apyrimidinic) lyase activity and introduces nicks in the DNA strand. Cleaves the DNA backbone by beta-delta elimination to generate a single-strand break at the site of the removed base with both 3'- and 5'-phosphates. This is Endonuclease 8 from Escherichia coli (strain K12 / MC4100 / BW2952).